Reading from the N-terminus, the 318-residue chain is Small ribosomal subunit protein uS3 (318 aa).

The 70-residue stretch at 17-86 (MDEYFAEQLS…NPQIDAQEVK (70 aa)) folds into the KH type-2 domain. Residues 198-229 (SVEVEEPAEKPAEKPAEKPAEKAAAPKKEAAK) are compositionally biased toward basic and acidic residues. The interval 198 to 275 (SVEVEEPAEK…VQAETSEEIE (78 aa)) is disordered. Pro residues predominate over residues 234 to 250 (APAPEAPAPAPEAPAPA). Over residues 253-275 (EEAEVAEPEEAEEVQAETSEEIE) the composition is skewed to acidic residues.

The protein belongs to the universal ribosomal protein uS3 family. In terms of assembly, part of the 30S ribosomal subunit.

Its function is as follows. Binds the lower part of the 30S subunit head. The chain is Small ribosomal subunit protein uS3 from Methanosarcina acetivorans (strain ATCC 35395 / DSM 2834 / JCM 12185 / C2A).